The chain runs to 95 residues: Small ribosomal subunit protein bS6 (95 aa).

The protein belongs to the bacterial ribosomal protein bS6 family.

Binds together with bS18 to 16S ribosomal RNA. The polypeptide is Small ribosomal subunit protein bS6 (Nocardia farcinica (strain IFM 10152)).